Reading from the N-terminus, the 287-residue chain is Protease HtpX (287 aa).

The next 2 membrane-spanning stretches (helical) occupy residues 4–24 and 33–53; these read IFLL…VMSI and GGLL…SLAI. His139 provides a ligand contact to Zn(2+). Residue Glu140 is part of the active site. His143 is a Zn(2+) binding site. The next 2 membrane-spanning stretches (helical) occupy residues 154–174 and 195–215; these read LIQG…AGII and AVVF…VAYF. Glu220 contributes to the Zn(2+) binding site.

The protein belongs to the peptidase M48B family. It depends on Zn(2+) as a cofactor.

The protein resides in the cell inner membrane. This chain is Protease HtpX, found in Shewanella baltica (strain OS185).